Here is a 305-residue protein sequence, read N- to C-terminus: Testis-expressed protein 52 (305 aa).

The segment at 284–305 (HLSKAQASKSPARKRKRRPGHF) is disordered. Basic residues predominate over residues 294–305 (PARKRKRRPGHF).

Expressed in Testis.

The chain is Testis-expressed protein 52 from Homo sapiens (Human).